A 252-amino-acid polypeptide reads, in one-letter code: Probable transcriptional regulatory protein A1C_04175 (252 aa).

This sequence belongs to the TACO1 family.

It localises to the cytoplasm. In Rickettsia akari (strain Hartford), this protein is Probable transcriptional regulatory protein A1C_04175.